The following is a 325-amino-acid chain: Odorant receptor 131-2 (325 aa).

The Extracellular portion of the chain corresponds to 1–22 (MNSTSNSSLGNTFISKTLKEKS). 2 N-linked (GlcNAc...) asparagine glycosylation sites follow: Asn2 and Asn6. The helical transmembrane segment at 23–43 (LTVQVLVGILLYVNGLMIFTF) threads the bilayer. Topologically, residues 44–54 (LKKETFRDTRY) are cytoplasmic. The chain crosses the membrane as a helical span at residues 55 to 75 (ILFAQTLFVDSALMLFADLTL). The Extracellular segment spans residues 76–91 (VGSAYELFIHIISCYI). A disulfide bridge links Cys89 with Cys170. A helical transmembrane segment spans residues 92-112 (FCTVMALLSICSPVTLVAMCL). Residues 113–135 (ERYVAICLPLRHASISSPKNTIN) are Cytoplasmic-facing. A helical membrane pass occupies residues 136 to 156 (GLLIIWGVSSVIPLFIFIVSF). The Extracellular portion of the chain corresponds to 157 to 190 (TYTPPNAMNSYVVCSNDVMFQVKWLAEMRALSQQ). Residues 191–211 (LLFVIMLCIVGSTYIKIMVAA) form a helical membrane-spanning segment. Residues 212–227 (KSASAENKKSTYKGLR) lie on the Cytoplasmic side of the membrane. The chain crosses the membrane as a helical span at residues 228–248 (TVILHGLQLILGMMQLITPYI). The Extracellular segment spans residues 249-267 (DILTLKVDIMLFINVKFSN). The helical transmembrane segment at 268 to 285 (FMLFWIFPRCLSPLVYGL) threads the bilayer. Residues 286–325 (RDKKFYNALKYYAFCGIYVCKKHKIKDSKTIRGAVSIAIY) lie on the Cytoplasmic side of the membrane.

It belongs to the G-protein coupled receptor 1 family. In terms of assembly, homodimer. Monomer.

The protein resides in the cell membrane. It localises to the cytoplasm. Its function is as follows. Probable olfactory receptor. This is Odorant receptor 131-2 from Danio rerio (Zebrafish).